A 137-amino-acid polypeptide reads, in one-letter code: Large ribosomal subunit protein uL16 (137 aa).

Belongs to the universal ribosomal protein uL16 family. Part of the 50S ribosomal subunit.

In terms of biological role, binds 23S rRNA and is also seen to make contacts with the A and possibly P site tRNAs. This is Large ribosomal subunit protein uL16 from Xanthomonas campestris pv. campestris (strain 8004).